The chain runs to 635 residues: Chaperone protein HtpG (635 aa).

The tract at residues 1 to 337 is a; substrate-binding; that stretch reads MELKMHNVQE…SPDLPLNISR (337 aa). Residues 338 to 556 are b; that stretch reads ETLQNNRVVE…EGAMDLRMER (219 aa). Residues 557–635 form a c region; it reads FLREQKQLNY…LNNLLGKISV (79 aa).

Belongs to the heat shock protein 90 family. Homodimer.

Its subcellular location is the cytoplasm. Molecular chaperone. Has ATPase activity. This Wolbachia pipientis wMel protein is Chaperone protein HtpG.